The chain runs to 408 residues: Histidine--tRNA ligase (408 aa).

It belongs to the class-II aminoacyl-tRNA synthetase family. In terms of assembly, homodimer.

Its subcellular location is the cytoplasm. The enzyme catalyses tRNA(His) + L-histidine + ATP = L-histidyl-tRNA(His) + AMP + diphosphate + H(+). The chain is Histidine--tRNA ligase from Wolbachia pipientis wMel.